A 69-amino-acid chain; its full sequence is DNA gyrase inhibitor YacG (69 aa).

4 residues coordinate Zn(2+): Cys-12, Cys-15, Cys-31, and Cys-35. The interval 49–69 (RVPVEPKPDEGETPDQAERPQ) is disordered.

The protein belongs to the DNA gyrase inhibitor YacG family. As to quaternary structure, interacts with GyrB. Requires Zn(2+) as cofactor.

Inhibits all the catalytic activities of DNA gyrase by preventing its interaction with DNA. Acts by binding directly to the C-terminal domain of GyrB, which probably disrupts DNA binding by the gyrase. In Thiobacillus denitrificans (strain ATCC 25259 / T1), this protein is DNA gyrase inhibitor YacG.